Here is a 424-residue protein sequence, read N- to C-terminus: Inhibin beta A chain (424 aa).

The N-terminal stretch at M1–S20 is a signal peptide. Residues S21–R308 constitute a propeptide that is removed on maturation. N165 carries an N-linked (GlcNAc...) asparagine glycan. 2 disordered regions span residues Q178–E200 and K260–R288. A compositionally biased stretch (basic and acidic residues) spans K263–G275. Cystine bridges form between C312–C320, C319–C389, C348–C421, and C352–C423.

It belongs to the TGF-beta family. Dimeric, linked by one or more disulfide bonds. Inhibin A is a dimer of alpha and beta-A. Inhibin B is a dimer of alpha and beta-B. Activin A is a homodimer of beta-A. Activin B is a homodimer of beta-B. Activin AB is a dimer of beta-A and beta-B. As to expression, ciliary ganglion neurons. Levels are higher in the choroid than the iris.

It is found in the secreted. Functionally, inhibins and activins inhibit and activate, respectively, the secretion of follitropin by the pituitary gland. Inhibins/activins are involved in regulating a number of diverse functions such as hypothalamic and pituitary hormone secretion, gonadal hormone secretion, germ cell development and maturation, erythroid differentiation, insulin secretion, nerve cell survival, embryonic axial development or bone growth, depending on their subunit composition. Inhibins appear to oppose the functions of activins. Induces somatostatin in the ciliary ganglion neurons and may play a role in regulating neurotransmitter phenotype. This chain is Inhibin beta A chain (INHBA), found in Gallus gallus (Chicken).